The chain runs to 95 residues: MNKSILHTIIIYTLASCPYCIKAKALLDKKNVIYEEIEVSNLTQEEKEKFIKKSGGKSTVPQIFIDNMHVGGCDDLFNLEKEGRLDKLLEHQPKN.

Residues 1–95 enclose the Glutaredoxin domain; that stretch reads MNKSILHTII…DKLLEHQPKN (95 aa). Cysteines 17 and 20 form a disulfide.

Belongs to the glutaredoxin family. Monomer.

The protein resides in the cytoplasm. Has a glutathione-disulfide oxidoreductase activity in the presence of NADPH and glutathione reductase. Reduces low molecular weight disulfides and proteins. In Rickettsia prowazekii (strain Madrid E), this protein is Glutaredoxin 1 (grxC1).